The primary structure comprises 530 residues: UDP-glucuronosyltransferase 1A8 (530 aa).

The first 25 residues, 1–25 (MAPSGCPPSLPLCVCLFLASGFAQA), serve as a signal peptide directing secretion. 3 N-linked (GlcNAc...) asparagine glycosylation sites follow: N71, N292, and N430. A helical membrane pass occupies residues 488-504 (VIGFLLAIVLTVVFIVY).

Belongs to the UDP-glycosyltransferase family. Homodimers. Homooligomer. Interacts with UGT1A1, UGT1A3, UGT1A4, UGT1A6, UGT1A7, UGT1A8, UGT1A9 and UGT1A10 to form heterodimers.

It is found in the endoplasmic reticulum membrane. The catalysed reaction is glucuronate acceptor + UDP-alpha-D-glucuronate = acceptor beta-D-glucuronoside + UDP + H(+). It carries out the reaction 17beta-estradiol + UDP-alpha-D-glucuronate = 17beta-estradiol 3-O-(beta-D-glucuronate) + UDP + H(+). It catalyses the reaction 17alpha-estradiol + UDP-alpha-D-glucuronate = 17alpha-estradiol 3-O-(beta-D-glucuronate) + UDP + H(+). The enzyme catalyses estrone + UDP-alpha-D-glucuronate = estrone 3-O-(beta-D-glucuronate) + UDP + H(+). The catalysed reaction is 16alpha,17alpha-estriol + UDP-alpha-D-glucuronate = 16alpha,17alpha-estriol 3-O-(beta-D-glucuronate) + UDP + H(+). It carries out the reaction 2-hydroxy-17beta-estradiol + UDP-alpha-D-glucuronate = 2-hydroxy-17beta-estradiol 3-O-(beta-D-glucuronate) + UDP + H(+). It catalyses the reaction 2-hydroxy-17beta-estradiol + UDP-alpha-D-glucuronate = 17beta-estradiol 2-O-(beta-D-glucuronate) + UDP + H(+). The enzyme catalyses 2-hydroxyestrone + UDP-alpha-D-glucuronate = 2-hydroxyestrone 3-O-(beta-D-glucuronate) + UDP + H(+). The catalysed reaction is 4-hydroxy-17beta-estradiol + UDP-alpha-D-glucuronate = 4-hydroxy-17beta-estradiol 3-O-(beta-D-glucuronate) + UDP + H(+). It carries out the reaction 4-hydroxy-17beta-estradiol + UDP-alpha-D-glucuronate = 17beta-estradiol 4-O-(beta-D-glucuronate) + UDP + H(+). It catalyses the reaction 4-hydroxyestrone + UDP-alpha-D-glucuronate = 4-hydroxyestrone 3-O-(beta-D-glucuronate) + UDP + H(+). The enzyme catalyses 4-hydroxyestrone + UDP-alpha-D-glucuronate = estrone 4-O-(beta-D-glucuronate) + UDP + H(+). The catalysed reaction is 2-methoxy-17beta-estradiol + UDP-alpha-D-glucuronate = 2-methoxy-17beta-estradiol 3-O-(beta-D-glucuronate) + UDP + H(+). It carries out the reaction 2-methoxyestrone + UDP-alpha-D-glucuronate = 2-methoxyestrone 3-O-(beta-D-glucuronate) + UDP + H(+). It catalyses the reaction 4-methoxy-17beta-estradiol + UDP-alpha-D-glucuronate = 4-methoxy-17beta-estradiol 3-O-(beta-D-glucuronate) + UDP + H(+). The enzyme catalyses 4-methoxyestrone + UDP-alpha-D-glucuronate = 4-methoxyestrone 3-O-(beta-D-glucuronate) + UDP + H(+). The catalysed reaction is 17beta-hydroxy-5alpha-androstan-3-one + UDP-alpha-D-glucuronate = 5alpha-dihydrotestosterone 17-O-(beta-D-glucuronate) + UDP + H(+). It carries out the reaction 5alpha-dihydrotestosterone 17-O-(beta-D-glucuronate) + UDP-alpha-D-glucuronate = 5alpha-dihydrotestosterone 17-O-[beta-D-glucuronosyl-(1-&gt;2)-glucuronate] + UDP + H(+). It catalyses the reaction prunetin + UDP-alpha-D-glucuronate = prunetin-4'-O-beta-D-glucuronide + UDP. The enzyme catalyses prunetin + UDP-alpha-D-glucuronate = prunetin-5-O-beta-D-glucuronide + UDP. The catalysed reaction is (E)-ferulate + UDP-alpha-D-glucuronate = (E)-4-O-(beta-D-glucuronosyl)-ferulate + UDP + H(+). It carries out the reaction (E)-ferulate + UDP-alpha-D-glucuronate = (E)-ferulic acid beta-D-glucuronate ester + UDP. It catalyses the reaction candesartan + UDP-alpha-D-glucuronate = candesartan O-beta-D-glucuronoside + UDP. The enzyme catalyses mycophenolate + UDP-alpha-D-glucuronate = mycophenolate 7-O-beta-D-glucuronide + UDP + H(+). Its function is as follows. UDP-glucuronosyltransferase (UGT) that catalyzes phase II biotransformation reactions in which lipophilic substrates are conjugated with glucuronic acid to increase the metabolite's water solubility, thereby facilitating excretion into either the urine or bile. Essential for the elimination and detoxification of drugs, xenobiotics and endogenous compounds. Catalyzes the glucuronidation of endogenous steroid hormones such as androgens and estrogens. Produces dihydrotestosterone (DHT) diglucuronide from the DHT after two subsequent glucoronidation steps. Involved in the glucuronidation of the phytochemical ferulic acid at the phenolic or the carboxylic acid group. Also catalyzes the glucuronidation of the isoflavones genistein, daidzein, glycitein, formononetin, biochanin A and prunetin, which are phytoestrogens with anticancer and cardiovascular properties. Involved in the glucuronidation of the AGTR1 angiotensin receptor antagonist caderastan, a drug which can inhibit the effect of angiotensin II. Also metabolizes mycophenolate, an immunosuppressive agent. The chain is UDP-glucuronosyltransferase 1A8 from Rattus norvegicus (Rat).